The chain runs to 394 residues: Bone morphogenetic protein 2 (394 aa).

Positions 1-19 are cleaved as a signal peptide; the sequence is MVAGTRCLLVLLLPQVLLG. A propeptide spans 20–280 (cleaved by PCSK5); the sequence is GAAGLIPELG…GHPLHKREKR (261 aa). A Phosphoserine modification is found at Ser86. Asn134, Asn162, and Asn198 each carry an N-linked (GlcNAc...) asparagine glycan. The tract at residues 269 to 291 is disordered; the sequence is GKGHPLHKREKRQAKHKQRKRLK. Positions 272–291 are enriched in basic residues; that stretch reads HPLHKREKRQAKHKQRKRLK. 3 disulfides stabilise this stretch: Cys294–Cys359, Cys323–Cys391, and Cys327–Cys393. Asn336 carries N-linked (GlcNAc...) asparagine glycosylation.

Belongs to the TGF-beta family. Homodimer; disulfide-linked. Interacts with SOSTDC1. Interacts with GREM2, RGMA, RGMB and RGMC. Interacts with ASPN. Interacts with MAFP5. Interacts with FBN1 (via N-terminal domain) and FBN2. Interacts with type I receptor BMPR1A. Interacts with type II receptor BMPR2. Interacts with SCUBE3. Interacts with TNFAIP6 (primarily via Link domain); this interaction is inhibited by hyaluronan. Interacts with ERFE. Interacts with BMPR1A/ALK3; the interaction may induce HAMP expression. Forms heterodimers with BMP6 in vitro; the heterodimer then binds to its receptor BMPR1A /ALK3 and may induce HAMP expression. Interacts with TGFBR3.

It localises to the secreted. Its function is as follows. Growth factor of the TGF-beta superfamily that plays essential roles in many developmental processes, including cardiogenesis, neurogenesis, and osteogenesis. Induces cartilage and bone formation. Initiates the canonical BMP signaling cascade by associating with type I receptor BMPR1A and type II receptor BMPR2. Once all three components are bound together in a complex at the cell surface, BMPR2 phosphorylates and activates BMPR1A. In turn, BMPR1A propagates signal by phosphorylating SMAD1/5/8 that travel to the nucleus and act as activators and repressors of transcription of target genes. Also acts to promote expression of HAMP, via the interaction with its receptor BMPR1A/ALK3. Can also signal through non-canonical pathways such as ERK/MAP kinase signaling cascade that regulates osteoblast differentiation. Also stimulates the differentiation of myoblasts into osteoblasts via the EIF2AK3-EIF2A-ATF4 pathway by stimulating EIF2A phosphorylation which leads to increased expression of ATF4 which plays a central role in osteoblast differentiation. Acts as a positive regulator of odontoblast differentiation during mesenchymal tooth germ formation, expression is repressed during the bell stage by MSX1-mediated inhibition of CTNNB1 signaling. The chain is Bone morphogenetic protein 2 (Bmp2) from Mus musculus (Mouse).